Here is an 85-residue protein sequence, read N- to C-terminus: Fungal defensin triintsin (85 aa).

Positions 1–21 (MQFTKLATVLIVSLMGSAAIA) are cleaved as a signal peptide. Residues 22-47 (APSVDNAPAVAAEEVAAAPAENLEKR) constitute a propeptide that is removed on maturation. 3 disulfide bridges follow: Cys51-Cys72, Cys58-Cys80, and Cys62-Cys82.

Belongs to the invertebrate defensin family. Disulfide bonds are essential for antimicrobial activity.

The protein resides in the secreted. Functionally, antimicrobial peptide with broad-spectrum activity against Gram-positive bacteria, Gram-negative bacteria, and fungi. Also inhibits clinical isolates, including methicillin-resistant S.aureus (MRSA) (MIC=32 uM), K.pneumoniae, C.albicans and C.parapsilosis. Displays minimal inhibitory concentration (MIC) values similar to minimal bactericidal concentrations (MBC), suggesting a disruptive mechanism mode of action associated with membrane lysis. In vitro, shows hemolytic activity against human red blood cells. The polypeptide is Fungal defensin triintsin (Trichophyton interdigitale (strain MR816)).